Consider the following 136-residue polypeptide: Putative pre-16S rRNA nuclease (136 aa).

The protein belongs to the YqgF nuclease family.

The protein resides in the cytoplasm. Could be a nuclease involved in processing of the 5'-end of pre-16S rRNA. The chain is Putative pre-16S rRNA nuclease from Francisella tularensis subsp. tularensis (strain FSC 198).